A 128-amino-acid chain; its full sequence is Probable soluble cytochrome b562 2 (128 aa).

An N-terminal signal peptide occupies residues 1 to 22 (MGKTLMALITAALLSTSSLVMA). Residues M29 and H124 each contribute to the heme b site.

This sequence belongs to the cytochrome b562 family. Requires heme b as cofactor.

It localises to the periplasm. Its function is as follows. Electron-transport protein of unknown function. This chain is Probable soluble cytochrome b562 2 (cybC2), found in Yersinia pestis.